The following is a 414-amino-acid chain: Probable serine/threonine-protein kinase PBL26 (414 aa).

The S-palmitoyl cysteine moiety is linked to residue Cys-3. Over residues 17–41 (RDSDNSYRRNGEVTGRDNNKTHPEN) the composition is skewed to basic and acidic residues. The segment at 17–55 (RDSDNSYRRNGEVTGRDNNKTHPENPKTVNEQNKNNDED) is disordered. Residues 79–356 (FRQECLIGEG…SDVVTALGFL (278 aa)) form the Protein kinase domain. Residues 85–93 (IGEGGFGRV) and Lys-108 contribute to the ATP site. Tyr-153 is subject to Phosphotyrosine. Asp-206 serves as the catalytic Proton acceptor. Ser-240 carries the phosphoserine modification. Thr-246 is subject to Phosphothreonine. A Phosphotyrosine modification is found at Tyr-254. A disordered region spans residues 364 to 394 (ISVPHYDDPPQPSDETSVEDSVAAEERERAV).

The protein belongs to the protein kinase superfamily. Ser/Thr protein kinase family. Palmitoylation at Cys-3 and Cys-6 are required for plasma membrane location.

The protein localises to the cell membrane. It carries out the reaction L-seryl-[protein] + ATP = O-phospho-L-seryl-[protein] + ADP + H(+). The enzyme catalyses L-threonyl-[protein] + ATP = O-phospho-L-threonyl-[protein] + ADP + H(+). May be involved in plant defense signaling. The polypeptide is Probable serine/threonine-protein kinase PBL26 (Arabidopsis thaliana (Mouse-ear cress)).